The primary structure comprises 1336 residues: MDVLEMFDVNYESPILESFDSTTQSLNDVHVFMSRIQMSAYDADGEGRIEYRNLKLYEISSGIFISTDRLDTGASGVEDDHEMVDYYSSARLTREFLGESLDSQKSDYFEGIKKVFSFYKNKCNESRYIKEFFEEIQFRNICGFPKQAGTSSTDIFDQFNSVDVLLQDPVTSVWNKKVGSKKANIVIIPPATNLPITEACATAGFQPEGFPKLGSGSFFTVQFDPFFSTRFKAHETDDVALLDPTLTLLHEMTHGLHFQKGIANPVNRSGETPAWATTWGRVTGDNDAFKETPMEELLTFNKHTIDDDIEISDHLKSTYIGFLYNGRNEDDPTESVDGVYQNVSSFLNQYRGFEISSDFQHFIESCYGVKYNQESKKFIVNPRNIKRYVQDGFFIDEAKFARILNIKTRSYYTLMPDNLGVWSYRVDILNRLRETFDEDRGLLSQELDFHTALTPVVSENPALELEVAGMQRMVSLPKIKASYLPSDIKIKNFTGQKISHDTILDTNISGIIISKIKYKSDFVVDESMPRSSLNTTNYNLSPIKGTKFETDIRDKTSVKVTVSEITAPMINHVMKLDNSKVLTERPSLNEDLEETFKNTKDVYIPKTTAMMKLKEGADQTLGAVGFAVWSGQILEDLYNLAQKKEVSIDQIKDDLMSILPFYCAYKNLSAEKYEQAFANATLDAFLIFATDGGGFAGLGITVGAIAINSMYAKAETMEAYDSMFGKYVDQYQNDIKNFTLNAYVQWENNILSRLWNESRLAITGFRNMLKTVKTVMEFDATNQAYSEEDRKIIKAKCEEIFSEFPMLMQTFAKNSMTANLENASKIFNDIVWQKIKEELDQYVIDSKKYFLDSLEEAYNNGSISAESYYKYQTEAREKFVSPREVIDLYIAAHDTVVKRKRYIRRYSRKYDLATDFKGNTVHLNGLGEGTQDIQDLYGNYSVYADKKTVSTQEGHFDQTIKIAKDTNTINKVVLAVSSNNGKEYALNKDEQYTISFWLRMPVPSSSEERRIFSYSAVSGVNKEVEELILQVKNNEFVLATANLLRNSEFVIEPRIALNRWVKITIVNENTRIKVYQNDNLLGLIKDSSRKKPIAQRGTFKFYNYNVDYQLDDISYYNGTISQRDIKYTFKEDHGQFVYDHWGERLQYNKAYYLLSDDNKSAFETVYETKRLKLKSVPGVDIKYLGMNDRVYGYYGGLQFKLVPLDSKNMNNYVRWGDKFTMQSIETTNLSLAIIQDNAYFAPTQLKLISNEGKSEEEIFTFDRNIKLQNAAILVGTGNSKQGPISAYKRGYSGDLWINGARLDGYVTVVNKSNYSNDEIQEKFKWIFVPKDANWVE.

The tract at residues 1 to 476 (MDVLEMFDVN…VAGMQRMVSL (476 aa)) is has protease activity. H250 provides a ligand contact to Zn(2+). Residue E251 is part of the active site. H254 and E296 together coordinate Zn(2+).

This sequence belongs to the peptidase M27 family. Zn(2+) is required as a cofactor.

It catalyses the reaction Limited hydrolysis of proteins of the neuroexocytosis apparatus, synaptobrevins, SNAP25 or syntaxin. No detected action on small molecule substrates.. With respect to regulation, inhibited by EDTA and 1,10-phenanthroline. Functionally, when overexpressed the N-terminus (residues 1-476) cleaves rat synaptobrevin-2/VAMP2 between '89-Trp-|-Trp-90' in vitro. This releases the cytoplasmic domain of VAMP2 from the synaptic vesicle membrane, which would prevent the assembly of the trans-SNARE complex on the membrane and thus prevent vesicle-target membrane fusion and neurotransmitter release. The sequence is that of Putative botulinum-like toxin Wo from Weissella oryzae (strain DSM 25784 / JCM 18191 / LMG 30913 / SG25).